The chain runs to 261 residues: Cytochrome c oxidase subunit 3 (261 aa).

The Mitochondrial matrix portion of the chain corresponds to 1–15; that stretch reads MTHQTHAYHMVNPSP. The helical transmembrane segment at 16–34 threads the bilayer; sequence WPLTGALSALLMTSGLIMW. Over 35–40 the chain is Mitochondrial intermembrane; that stretch reads FHFNST. The helical transmembrane segment at 41–66 threads the bilayer; the sequence is TLLMLGLTTNMLTMYQWWRDVVREST. Residues 67 to 72 are Mitochondrial matrix-facing; it reads FQGHHT. The chain crosses the membrane as a helical span at residues 73 to 105; the sequence is PNVQKGLRYGMILFIISEVLFFTGFFWAFYHSS. Residues 106–128 lie on the Mitochondrial intermembrane side of the membrane; that stretch reads LAPTPELGGCWPPTGIHPLNPLE. The chain crosses the membrane as a helical span at residues 129–152; sequence VPLLNTSVLLASGVSITWAHHSLM. Over 153–155 the chain is Mitochondrial matrix; it reads EGN. The chain crosses the membrane as a helical span at residues 156–183; the sequence is RNHMLQALFITIALGVYFTLLQASEYYE. The Mitochondrial intermembrane portion of the chain corresponds to 184–190; the sequence is APFTISD. A helical membrane pass occupies residues 191–223; the sequence is GVYGSTFFVATGFHGLHVIIGSTFLIVCFFRQL. Topologically, residues 224 to 232 are mitochondrial matrix; sequence KFHFTSNHH. Residues 233–256 form a helical membrane-spanning segment; it reads FGFEAAAWYWHFVDVVWLFLYVSI. At 257–261 the chain is on the mitochondrial intermembrane side; that stretch reads YWWGS.

It belongs to the cytochrome c oxidase subunit 3 family. As to quaternary structure, component of the cytochrome c oxidase (complex IV, CIV), a multisubunit enzyme composed of 14 subunits. The complex is composed of a catalytic core of 3 subunits MT-CO1, MT-CO2 and MT-CO3, encoded in the mitochondrial DNA, and 11 supernumerary subunits COX4I, COX5A, COX5B, COX6A, COX6B, COX6C, COX7A, COX7B, COX7C, COX8 and NDUFA4, which are encoded in the nuclear genome. The complex exists as a monomer or a dimer and forms supercomplexes (SCs) in the inner mitochondrial membrane with NADH-ubiquinone oxidoreductase (complex I, CI) and ubiquinol-cytochrome c oxidoreductase (cytochrome b-c1 complex, complex III, CIII), resulting in different assemblies (supercomplex SCI(1)III(2)IV(1) and megacomplex MCI(2)III(2)IV(2)).

It is found in the mitochondrion inner membrane. The enzyme catalyses 4 Fe(II)-[cytochrome c] + O2 + 8 H(+)(in) = 4 Fe(III)-[cytochrome c] + 2 H2O + 4 H(+)(out). Its function is as follows. Component of the cytochrome c oxidase, the last enzyme in the mitochondrial electron transport chain which drives oxidative phosphorylation. The respiratory chain contains 3 multisubunit complexes succinate dehydrogenase (complex II, CII), ubiquinol-cytochrome c oxidoreductase (cytochrome b-c1 complex, complex III, CIII) and cytochrome c oxidase (complex IV, CIV), that cooperate to transfer electrons derived from NADH and succinate to molecular oxygen, creating an electrochemical gradient over the inner membrane that drives transmembrane transport and the ATP synthase. Cytochrome c oxidase is the component of the respiratory chain that catalyzes the reduction of oxygen to water. Electrons originating from reduced cytochrome c in the intermembrane space (IMS) are transferred via the dinuclear copper A center (CU(A)) of subunit 2 and heme A of subunit 1 to the active site in subunit 1, a binuclear center (BNC) formed by heme A3 and copper B (CU(B)). The BNC reduces molecular oxygen to 2 water molecules using 4 electrons from cytochrome c in the IMS and 4 protons from the mitochondrial matrix. The sequence is that of Cytochrome c oxidase subunit 3 (MT-CO3) from Gazella cuvieri (Cuvier's gazelle).